The following is a 475-amino-acid chain: Bifunctional protein HldE (475 aa).

The interval Met-1 to Thr-318 is ribokinase. Asn-195–Glu-198 contacts ATP. Asp-264 is a catalytic residue. Residues Met-344–Gly-475 form a cytidylyltransferase region.

It in the N-terminal section; belongs to the carbohydrate kinase PfkB family. This sequence in the C-terminal section; belongs to the cytidylyltransferase family. In terms of assembly, homodimer.

The catalysed reaction is D-glycero-beta-D-manno-heptose 7-phosphate + ATP = D-glycero-beta-D-manno-heptose 1,7-bisphosphate + ADP + H(+). It carries out the reaction D-glycero-beta-D-manno-heptose 1-phosphate + ATP + H(+) = ADP-D-glycero-beta-D-manno-heptose + diphosphate. Its pathway is nucleotide-sugar biosynthesis; ADP-L-glycero-beta-D-manno-heptose biosynthesis; ADP-L-glycero-beta-D-manno-heptose from D-glycero-beta-D-manno-heptose 7-phosphate: step 1/4. It functions in the pathway nucleotide-sugar biosynthesis; ADP-L-glycero-beta-D-manno-heptose biosynthesis; ADP-L-glycero-beta-D-manno-heptose from D-glycero-beta-D-manno-heptose 7-phosphate: step 3/4. Catalyzes the phosphorylation of D-glycero-D-manno-heptose 7-phosphate at the C-1 position to selectively form D-glycero-beta-D-manno-heptose-1,7-bisphosphate. Its function is as follows. Catalyzes the ADP transfer from ATP to D-glycero-beta-D-manno-heptose 1-phosphate, yielding ADP-D-glycero-beta-D-manno-heptose. The sequence is that of Bifunctional protein HldE from Aeromonas salmonicida (strain A449).